Here is a 476-residue protein sequence, read N- to C-terminus: 23S rRNA (uracil(1939)-C(5))-methyltransferase RlmD (476 aa).

A TRAM domain is found at 1 to 55 (MVDEVLKIESLDLEARGIARRDGKVVFVEGALPGERVYAATVRRKPSYEIARVET). [4Fe-4S] cluster-binding residues include C68, C74, C77, and C156. 6 residues coordinate S-adenosyl-L-methionine: Q265, F294, N299, E315, N343, and D364. C394 functions as the Nucleophile in the catalytic mechanism.

Belongs to the class I-like SAM-binding methyltransferase superfamily. RNA M5U methyltransferase family. RlmD subfamily.

It catalyses the reaction uridine(1939) in 23S rRNA + S-adenosyl-L-methionine = 5-methyluridine(1939) in 23S rRNA + S-adenosyl-L-homocysteine + H(+). In terms of biological role, catalyzes the formation of 5-methyl-uridine at position 1939 (m5U1939) in 23S rRNA. This is 23S rRNA (uracil(1939)-C(5))-methyltransferase RlmD from Bordetella avium (strain 197N).